A 199-amino-acid chain; its full sequence is ATP synthase subunit a (199 aa).

5 helical membrane-spanning segments follow: residues 2 to 22 (NQVYFLDIFMFVFVLQFLFYF), 53 to 73 (VISVFTFIILLTCCFGGYFTY), 80 to 100 (MVEFTFVYAAVAWLSTLLTFI), 141 to 161 (LTVNIMVGHLISMMLYQGLEL), and 169 to 189 (WLSIFAIMMECFVFFIQSYIF).

The protein belongs to the ATPase A chain family. F-type ATPases have 2 components, CF(1) - the catalytic core - and CF(0) - the membrane proton channel. CF(1) has five subunits: alpha(3), beta(3), gamma(1), delta(1), epsilon(1). CF(0) has three main subunits: a, b and c.

Its subcellular location is the mitochondrion inner membrane. Its function is as follows. Mitochondrial membrane ATP synthase (F(1)F(0) ATP synthase or Complex V) produces ATP from ADP in the presence of a proton gradient across the membrane which is generated by electron transport complexes of the respiratory chain. F-type ATPases consist of two structural domains, F(1) - containing the extramembraneous catalytic core and F(0) - containing the membrane proton channel, linked together by a central stalk and a peripheral stalk. During catalysis, ATP synthesis in the catalytic domain of F(1) is coupled via a rotary mechanism of the central stalk subunits to proton translocation. Key component of the proton channel; it may play a direct role in the translocation of protons across the membrane. The sequence is that of ATP synthase subunit a (atp6) from Caenorhabditis briggsae.